The primary structure comprises 177 residues: Interleukin-1 receptor antagonist protein (177 aa).

The N-terminal stretch at 1–25 (MEVCRCHHGYLISLLLFLFHSETAC) is a signal peptide. Cysteines 91 and 141 form a disulfide. 2 N-linked (GlcNAc...) asparagine glycosylation sites follow: Asn-109 and Asn-114.

This sequence belongs to the IL-1 family.

The protein resides in the secreted. Functionally, anti-inflammatory antagonist of interleukin-1 family of proinflammatory cytokines such as interleukin-1beta/IL1B and interleukin-1alpha/IL1A. Protects from immune dysregulation and uncontrolled systemic inflammation triggered by IL1 for a range of innate stimulatory agents such as pathogens. In Tursiops truncatus (Atlantic bottle-nosed dolphin), this protein is Interleukin-1 receptor antagonist protein (IL1RN).